The sequence spans 355 residues: Guanine nucleotide-binding protein subunit beta-5a (355 aa).

Residues 1–23 (MAAQEEPAQPGDSLATLKSESDT) are disordered. WD repeat units follow at residues 63-102 (GHGNKVLCMDWCKDKRRIVSSSQDGKVIVWDAFTTNKEHA), 105-144 (MPCTWVMACAYAPSGCAVACGGLDNKCSVYPLSLDKNENL), 153-194 (MHTN…QSFH), 195-238 (GHAA…QSFE), 239-278 (SHDSDINSVRYYPSGDAFASGSDDATCRLYDLRADREVAI), 280-322 (SKES…RVSI), and 325-355 (GHENRVSTLRVSPDGTAFCSGSWDHTLRIWA).

This sequence belongs to the WD repeat G protein beta family. May interact with RGS9; this interaction stabilizes both proteins and increases RGS9 GTPase-activating protein (GAP) activity, hence accelerating the deactivation of D(2) dopamine receptor-mediated signaling.

Its subcellular location is the membrane. Its function is as follows. Enhances GTPase-activating protein (GAP) activity of regulator of G protein signaling (RGS) proteins, such as RGS7 and RGS9, hence involved in the termination of the signaling initiated by the G protein coupled receptors (GPCRs) by accelerating the GTP hydrolysis on the G-alpha subunits, thereby promoting their inactivation. Increases RGS7 GTPase-activating protein (GAP) activity, thereby regulating mood and cognition. Increases RGS9 GTPase-activating protein (GAP) activity, hence contributes to the deactivation of G protein signaling initiated by D(2) dopamine receptors. Along with gnb5b, plays an important role in neuronal signaling, including in the parasympathetic, but not sympathetic, control of heart rate. This chain is Guanine nucleotide-binding protein subunit beta-5a, found in Danio rerio (Zebrafish).